Consider the following 391-residue polypeptide: Carbamoyl phosphate synthase small chain (391 aa).

Residues 1 to 189 are CPSase; that stretch reads MIKSALLVLE…DLPAAKQPED (189 aa). Ser-47, Gly-241, and Gly-243 together coordinate L-glutamine. A Glutamine amidotransferase type-1 domain is found at 193–380; the sequence is HVVAYDYGVK…IELIEAYRAS (188 aa). The Nucleophile role is filled by Cys-269. L-glutamine-binding residues include Leu-270, Gln-273, Asn-311, Gly-313, and Phe-314. Residues His-353 and Glu-355 contribute to the active site.

Belongs to the CarA family. As to quaternary structure, composed of two chains; the small (or glutamine) chain promotes the hydrolysis of glutamine to ammonia, which is used by the large (or ammonia) chain to synthesize carbamoyl phosphate. Tetramer of heterodimers (alpha,beta)4.

It catalyses the reaction hydrogencarbonate + L-glutamine + 2 ATP + H2O = carbamoyl phosphate + L-glutamate + 2 ADP + phosphate + 2 H(+). It carries out the reaction L-glutamine + H2O = L-glutamate + NH4(+). Its pathway is amino-acid biosynthesis; L-arginine biosynthesis; carbamoyl phosphate from bicarbonate: step 1/1. It participates in pyrimidine metabolism; UMP biosynthesis via de novo pathway; (S)-dihydroorotate from bicarbonate: step 1/3. Its function is as follows. Small subunit of the glutamine-dependent carbamoyl phosphate synthetase (CPSase). CPSase catalyzes the formation of carbamoyl phosphate from the ammonia moiety of glutamine, carbonate, and phosphate donated by ATP, constituting the first step of 2 biosynthetic pathways, one leading to arginine and/or urea and the other to pyrimidine nucleotides. The small subunit (glutamine amidotransferase) binds and cleaves glutamine to supply the large subunit with the substrate ammonia. This Yersinia pestis protein is Carbamoyl phosphate synthase small chain.